Here is a 195-residue protein sequence, read N- to C-terminus: Peptidyl-tRNA hydrolase (195 aa).

Tyr-17 provides a ligand contact to tRNA. Catalysis depends on His-22, which acts as the Proton acceptor. Tyr-68, Asn-70, and Asn-116 together coordinate tRNA.

Belongs to the PTH family. Monomer.

The protein localises to the cytoplasm. It carries out the reaction an N-acyl-L-alpha-aminoacyl-tRNA + H2O = an N-acyl-L-amino acid + a tRNA + H(+). Its function is as follows. Hydrolyzes ribosome-free peptidyl-tRNAs (with 1 or more amino acids incorporated), which drop off the ribosome during protein synthesis, or as a result of ribosome stalling. Functionally, catalyzes the release of premature peptidyl moieties from peptidyl-tRNA molecules trapped in stalled 50S ribosomal subunits, and thus maintains levels of free tRNAs and 50S ribosomes. The polypeptide is Peptidyl-tRNA hydrolase (Shewanella sp. (strain ANA-3)).